A 666-amino-acid polypeptide reads, in one-letter code: MAINTSNLCSLLFLLSLFLLSTTVSLAESEFDRQEYEECKRQCMQLETSGQMRRCVSQCDKRFEEDIDWSKYDNQEDPQTECQQCQRRCRQQESGPRQQQYCQRRCKEICEEEEEYNRQRDPQQQYEQCQKHCQRRETEPRHMQTCQQRCERRYEKEKRKQQKRYEEQQREDEEKYEERMKEEDNKRDPQQREYEDCRRRCEQQEPRQQHQCQLRCREQQRQHGRGGDMMNPQRGGSGRYEEGEEEQSDNPYYFDERSLSTRFRTEEGHISVLENFYGRSKLLRALKNYRLVLLEANPNAFVLPTHLDADAILLVIGGRGALKMIHHDNRESYNLECGDVIRIPAGTTFYLINRDNNERLHIAKFLQTISTPGQYKEFFPAGGQNPEPYLSTFSKEILEAALNTQTEKLRGVFGQQREGVIIRASQEQIRELTRDDSESRHWHIRRGGESSRGPYNLFNKRPLYSNKYGQAYEVKPEDYRQLQDMDLSVFIANVTQGSMMGPFFNTRSTKVVVVASGEADVEMACPHLSGRHGGRGGGKRHEEEEDVHYEQVRARLSKREAIVVLAGHPVVFVSSGNENLLLFAFGINAQNNHENFLAGRERNVLQQIEPQAMELAFAAPRKEVEESFNSQDQSIFFPGPRQHQQQSPRSTKQQQPLVSILDFVGF.

A signal peptide spans 1 to 27; that stretch reads MAINTSNLCSLLFLLSLFLLSTTVSLA. Disordered regions lie at residues 161–191 and 219–254; these read QQKR…DPQQ and QQRQ…PYYF. Cupin type-1 domains lie at 271–410 and 455–625; these read SVLE…EKLR and YNLF…KEVE. A disordered region spans residues 629–655; the sequence is NSQDQSIFFPGPRQHQQQSPRSTKQQQ. The span at 642–655 shows a compositional bias: low complexity; that stretch reads QHQQQSPRSTKQQQ.

It belongs to the 7S seed storage protein family.

The protein localises to the secreted. Functionally, antimicrobial peptides 2b, 2c and 2d have antibacterial and antifungal activity against a range of species. The protein is Vicilin-like antimicrobial peptides 2-1 of Macadamia integrifolia (Macadamia nut).